Reading from the N-terminus, the 174-residue chain is Co-chaperone protein HscB homolog (174 aa).

The J domain occupies 2–74 (NYFELFNLPV…IRRAEHMLAL (73 aa)).

Belongs to the HscB family. In terms of assembly, interacts with HscA and stimulates its ATPase activity.

Its function is as follows. Co-chaperone involved in the maturation of iron-sulfur cluster-containing proteins. Seems to help targeting proteins to be folded toward HscA. This is Co-chaperone protein HscB homolog from Shewanella amazonensis (strain ATCC BAA-1098 / SB2B).